The primary structure comprises 74 residues: Conotoxin Vt11.7 (74 aa).

Residues 1–26 form the signal peptide; the sequence is MMFRLTSVGCFLLVIVLLNVAVLTNA. 4 disulfides stabilise this stretch: cysteine 28–cysteine 42, cysteine 35–cysteine 47, cysteine 41–cysteine 51, and cysteine 46–cysteine 55. Positions 62-74 are excised as a propeptide; it reads AHGHGLLRFWGQR.

It belongs to the conotoxin I2 superfamily. As to expression, expressed by the venom duct.

It localises to the secreted. The sequence is that of Conotoxin Vt11.7 from Conus planorbis (Planorbis cone).